The sequence spans 254 residues: Trans-aconitate 2-methyltransferase (254 aa).

This sequence belongs to the methyltransferase superfamily. Tam family.

It localises to the cytoplasm. It catalyses the reaction trans-aconitate + S-adenosyl-L-methionine = (E)-3-(methoxycarbonyl)pent-2-enedioate + S-adenosyl-L-homocysteine. Functionally, catalyzes the S-adenosylmethionine monomethyl esterification of trans-aconitate. In Rhodococcus jostii (strain RHA1), this protein is Trans-aconitate 2-methyltransferase.